Consider the following 231-residue polypeptide: Uracil-DNA glycosylase (231 aa).

Catalysis depends on Asp74, which acts as the Proton acceptor.

This sequence belongs to the uracil-DNA glycosylase (UDG) superfamily. UNG family.

It is found in the cytoplasm. It catalyses the reaction Hydrolyzes single-stranded DNA or mismatched double-stranded DNA and polynucleotides, releasing free uracil.. Functionally, excises uracil residues from the DNA which can arise as a result of misincorporation of dUMP residues by DNA polymerase or due to deamination of cytosine. This chain is Uracil-DNA glycosylase, found in Campylobacter jejuni subsp. jejuni serotype O:23/36 (strain 81-176).